The sequence spans 550 residues: Arginine--tRNA ligase (550 aa).

The 'HIGH' region signature appears at 130-140 (ANPTGPIHLGG).

The protein belongs to the class-I aminoacyl-tRNA synthetase family. Monomer.

Its subcellular location is the cytoplasm. The enzyme catalyses tRNA(Arg) + L-arginine + ATP = L-arginyl-tRNA(Arg) + AMP + diphosphate. This Rhodococcus erythropolis (strain PR4 / NBRC 100887) protein is Arginine--tRNA ligase.